Here is a 353-residue protein sequence, read N- to C-terminus: UDP-xylose transporter 2 (353 aa).

10 consecutive transmembrane segments (helical) span residues 7–27 (FQLG…SIVI), 31–51 (ALIS…HLLV), 75–95 (VLGF…SLGF), 100–120 (FYQM…TIFF), 132–152 (LVIL…LNML), 154–174 (SVLS…TNTI), 194–214 (AITL…QNVF), 224–244 (FFIV…FLVI), 250–270 (VTYQ…GYLL), and 280–300 (ILGI…CTLE). A disordered region spans residues 308–353 (TSTQLPQMDENEKDPLVSAENGSGLISDNGVQKQDPVWNSNKDFQA). Residues 327–353 (ENGSGLISDNGVQKQDPVWNSNKDFQA) are compositionally biased toward polar residues. Phosphoserine is present on Ser334.

It belongs to the TPT transporter family. TPT (TC 2.A.7.9) subfamily. In terms of tissue distribution, ubiquitous.

The protein localises to the golgi apparatus membrane. In terms of biological role, nucleotide-sugar transporter that transports UDP-xylose and UMP in a strict counter-exchange mode. The protein is UDP-xylose transporter 2 of Arabidopsis thaliana (Mouse-ear cress).